The following is a 284-amino-acid chain: Nucleotide-binding protein Sputw3181_3461 (284 aa).

8 to 15 is a binding site for ATP; that stretch reads GRSGSGKS. 56–59 provides a ligand contact to GTP; it reads DVRN.

The protein belongs to the RapZ-like family.

Displays ATPase and GTPase activities. The chain is Nucleotide-binding protein Sputw3181_3461 from Shewanella sp. (strain W3-18-1).